The chain runs to 872 residues: Sine oculis-binding protein homolog (872 aa).

The span at 1 to 14 (MAEMEKEGRPPENK) shows a compositional bias: basic and acidic residues. Positions 1 to 26 (MAEMEKEGRPPENKRSRKPAHPVKRE) are disordered. 2 FCS-type zinc fingers span residues 142–180 (DDVSNVQIMCAWCQKVGIKRYSLSMGSEVKSFCSEKCFA) and 216–256 (FKNN…KCLN). Disordered stretches follow at residues 308–354 (RRKA…KSMP), 411–484 (FIRG…PGAP), and 550–619 (KPPN…GRSE). The segment covering 319-344 (GQSQGPGPSASTTVSPSDTANCSVTK) has biased composition (polar residues). Low complexity predominate over residues 417 to 433 (HHASNPNSPLSNPMLPG). Residues 460-484 (IHPPSTPTMPGNPPGLLPPPPPGAP) show a composition bias toward pro residues. Residues 620-624 (VVDLT) carry the SUMO interaction motif 1 (SIM); mediates the binding to polysumoylated substrates motif. Residue S629 is modified to Phosphoserine. The short motif at 651–655 (VIDLT) is the SUMO interaction motif 2 (SIM); mediates the binding to polysumoylated substrates element. Residue K675 forms a Glycyl lysine isopeptide (Lys-Gly) (interchain with G-Cter in SUMO2) linkage. A Phosphoserine modification is found at S697. The interval 728-770 (AAEGAKGAEPPPEQPPPPPPPPPAPPKKLLSPEEPAVSELESV) is disordered. Residues 736 to 753 (EPPPEQPPPPPPPPPAPP) are compositionally biased toward pro residues.

Belongs to the SOBP family. Interacts (via SIM domains) with SUMO1 and SUMO2.

Implicated in development of the cochlea. In Bos taurus (Bovine), this protein is Sine oculis-binding protein homolog.